A 495-amino-acid polypeptide reads, in one-letter code: Trigger factor (495 aa).

Residues 162–243 (DDFVSIDLSA…VKSLKERELP (82 aa)) form the PPIase FKBP-type domain. Basic and acidic residues predominate over residues 425–437 (DTDGNEIDPKEYF). The tract at residues 425-495 (DTDGNEIDPK…TDDDSENAEK (71 aa)) is disordered. Residues 450–461 (SADAEASENSEA) are compositionally biased toward low complexity. Over residues 486-495 (TDDDSENAEK) the composition is skewed to acidic residues.

The protein belongs to the FKBP-type PPIase family. Tig subfamily.

The protein localises to the cytoplasm. It catalyses the reaction [protein]-peptidylproline (omega=180) = [protein]-peptidylproline (omega=0). Its function is as follows. Involved in protein export. Acts as a chaperone by maintaining the newly synthesized protein in an open conformation. Functions as a peptidyl-prolyl cis-trans isomerase. This Corynebacterium kroppenstedtii (strain DSM 44385 / JCM 11950 / CIP 105744 / CCUG 35717) protein is Trigger factor.